We begin with the raw amino-acid sequence, 258 residues long: MLAKRIIPCLDVRDGQVVKGVQFRNHEIIGDIVPLAKRYAEEGADELVFYDITASSDGRVVDKSWVSRVAEVIDIPFCVAGGIKSLEDAAKILSFGADKISINSPALADPTLITRLADRFGVQCIVVGIDTWYDAETGKYHVNQYTGDESRTRVTQWETLDWVQEVQKRGAGEVVLNMMNQDGVRNGYDLEQLKKVREVCHVPLIASGGAGTMEHFLEAFRDADVDGALAASVFHKQIINIGELKAYLATQGVEIRIC.

Residues Asp11 and Asp130 contribute to the active site.

Belongs to the HisA/HisF family. Heterodimer of HisH and HisF.

It is found in the cytoplasm. The enzyme catalyses 5-[(5-phospho-1-deoxy-D-ribulos-1-ylimino)methylamino]-1-(5-phospho-beta-D-ribosyl)imidazole-4-carboxamide + L-glutamine = D-erythro-1-(imidazol-4-yl)glycerol 3-phosphate + 5-amino-1-(5-phospho-beta-D-ribosyl)imidazole-4-carboxamide + L-glutamate + H(+). Its pathway is amino-acid biosynthesis; L-histidine biosynthesis; L-histidine from 5-phospho-alpha-D-ribose 1-diphosphate: step 5/9. Functionally, IGPS catalyzes the conversion of PRFAR and glutamine to IGP, AICAR and glutamate. The HisF subunit catalyzes the cyclization activity that produces IGP and AICAR from PRFAR using the ammonia provided by the HisH subunit. This chain is Imidazole glycerol phosphate synthase subunit HisF, found in Shigella boydii serotype 4 (strain Sb227).